A 350-amino-acid chain; its full sequence is Protein RecA (350 aa).

ATP is bound at residue 67 to 74; the sequence is GPESSGKT.

It belongs to the RecA family.

The protein resides in the cytoplasm. Can catalyze the hydrolysis of ATP in the presence of single-stranded DNA, the ATP-dependent uptake of single-stranded DNA by duplex DNA, and the ATP-dependent hybridization of homologous single-stranded DNAs. It interacts with LexA causing its activation and leading to its autocatalytic cleavage. This Chlamydia caviae (strain ATCC VR-813 / DSM 19441 / 03DC25 / GPIC) (Chlamydophila caviae) protein is Protein RecA.